Consider the following 363-residue polypeptide: Adenosine deaminase (363 aa).

Ala2 carries the post-translational modification N-acetylalanine. The Zn(2+) site is built by His15 and His17. Residues His17 and Asp19 each coordinate substrate. Lys54 carries the N6-acetyllysine modification. A substrate-binding site is contributed by Gly184. His214 lines the Zn(2+) pocket. Residue Glu217 is the Proton donor of the active site. Position 232 is an N6-acetyllysine (Lys232). Asp295 contacts Zn(2+). Position 296 (Asp296) interacts with substrate.

This sequence belongs to the metallo-dependent hydrolases superfamily. Adenosine and AMP deaminases family. In terms of assembly, interacts with DPP4 (via extracellular domain). Interacts with PLG (via Kringle 4 domain); the interaction stimulates PLG activation when in complex with DPP4. Requires Zn(2+) as cofactor. In terms of tissue distribution, expressed in gastrointestinal tissues (at protein level).

The protein resides in the cell membrane. It is found in the cell junction. The protein localises to the cytoplasmic vesicle lumen. It localises to the cytoplasm. Its subcellular location is the lysosome. It carries out the reaction adenosine + H2O + H(+) = inosine + NH4(+). The catalysed reaction is 2'-deoxyadenosine + H2O + H(+) = 2'-deoxyinosine + NH4(+). It catalyses the reaction cordycepin + H2O + H(+) = 3'-deoxyinosine + NH4(+). Catalyzes the hydrolytic deamination of adenosine and 2-deoxyadenosine. Plays an important role in purine metabolism and in adenosine homeostasis. Modulates signaling by extracellular adenosine, and so contributes indirectly to cellular signaling events. Acts as a positive regulator of T-cell coactivation, by binding DPP4. Its interaction with DPP4 regulates lymphocyte-epithelial cell adhesion. Enhances dendritic cell immunogenicity by affecting dendritic cell costimulatory molecule expression and cytokines and chemokines secretion. Enhances CD4+ T-cell differentiation and proliferation. Acts as a positive modulator of adenosine receptors ADORA1 and ADORA2A, by enhancing their ligand affinity via conformational change. Stimulates plasminogen activation. Plays a role in male fertility. Plays a protective role in early postimplantation embryonic development. Also responsible for the deamination of cordycepin (3'-deoxyadenosine), a fungal natural product that shows antitumor, antibacterial, antifungal, antivirus, and immune regulation properties. This chain is Adenosine deaminase (ADA), found in Bos taurus (Bovine).